A 421-amino-acid chain; its full sequence is Mitochondrial distribution and morphology protein 10 (421 aa).

The protein belongs to the MDM10 family. As to quaternary structure, component of the ER-mitochondria encounter structure (ERMES) or MDM complex, composed of MMM1, MDM10, MDM12 and MDM34. Associates with the mitochondrial outer membrane sorting assembly machinery SAM(core) complex.

Its subcellular location is the mitochondrion outer membrane. Component of the ERMES/MDM complex, which serves as a molecular tether to connect the endoplasmic reticulum and mitochondria. Components of this complex are involved in the control of mitochondrial shape and protein biogenesis and may function in phospholipid exchange. MDM10 is involved in the late assembly steps of the general translocase of the mitochondrial outer membrane (TOM complex). Functions in the TOM40-specific route of the assembly of outer membrane beta-barrel proteins, including the association of TOM40 with the receptor TOM22 and small TOM proteins. Can associate with the SAM(core) complex as well as the MDM12-MMM1 complex, both involved in late steps of the major beta-barrel assembly pathway, that is responsible for biogenesis of all outer membrane beta-barrel proteins. May act as a switch that shuttles between both complexes and channels precursor proteins into the TOM40-specific pathway. Plays a role in mitochondrial morphology and in the inheritance of mitochondria. This chain is Mitochondrial distribution and morphology protein 10, found in Vanderwaltozyma polyspora (strain ATCC 22028 / DSM 70294 / BCRC 21397 / CBS 2163 / NBRC 10782 / NRRL Y-8283 / UCD 57-17) (Kluyveromyces polysporus).